Reading from the N-terminus, the 233-residue chain is Phosphatidylserine decarboxylase proenzyme (233 aa).

S188 (schiff-base intermediate with substrate; via pyruvic acid) is an active-site residue. S188 carries the pyruvic acid (Ser); by autocatalysis modification.

The protein belongs to the phosphatidylserine decarboxylase family. PSD-A subfamily. In terms of assembly, heterodimer of a large membrane-associated beta subunit and a small pyruvoyl-containing alpha subunit. It depends on pyruvate as a cofactor. Post-translationally, is synthesized initially as an inactive proenzyme. Formation of the active enzyme involves a self-maturation process in which the active site pyruvoyl group is generated from an internal serine residue via an autocatalytic post-translational modification. Two non-identical subunits are generated from the proenzyme in this reaction, and the pyruvate is formed at the N-terminus of the alpha chain, which is derived from the carboxyl end of the proenzyme. The post-translation cleavage follows an unusual pathway, termed non-hydrolytic serinolysis, in which the side chain hydroxyl group of the serine supplies its oxygen atom to form the C-terminus of the beta chain, while the remainder of the serine residue undergoes an oxidative deamination to produce ammonia and the pyruvoyl prosthetic group on the alpha chain.

Its subcellular location is the cell membrane. It catalyses the reaction a 1,2-diacyl-sn-glycero-3-phospho-L-serine + H(+) = a 1,2-diacyl-sn-glycero-3-phosphoethanolamine + CO2. Its pathway is phospholipid metabolism; phosphatidylethanolamine biosynthesis; phosphatidylethanolamine from CDP-diacylglycerol: step 2/2. Catalyzes the formation of phosphatidylethanolamine (PtdEtn) from phosphatidylserine (PtdSer). The chain is Phosphatidylserine decarboxylase proenzyme from Ruegeria sp. (strain TM1040) (Silicibacter sp.).